Here is a 184-residue protein sequence, read N- to C-terminus: MSWRSEYIWVEFIAGSRKPGNFFWAFILFLGSLGFLVVGISSYLDRNLLSLFPSQQINFFPQGIVMSFYGIAGLFISSYLWCTIIWNVGSGYDRFDTKEGIVCIFRWGFPGKNRRIFLRFLMKDIQSIRIEVKEGIYARRVLYIESRGLGAIPLNRTDENLTPREIEQKAAELAYFLRVPIEGF.

2 consecutive transmembrane segments (helical) span residues 20–40 and 64–84; these read GNFF…VVGI and IVMS…WCTI.

It belongs to the Ycf4 family.

It is found in the plastid. The protein localises to the chloroplast thylakoid membrane. Its function is as follows. Seems to be required for the assembly of the photosystem I complex. The polypeptide is Photosystem I assembly protein Ycf4 (Citrus sinensis (Sweet orange)).